Consider the following 344-residue polypeptide: Heat-inducible transcription repressor HrcA (344 aa).

Belongs to the HrcA family.

Its function is as follows. Negative regulator of class I heat shock genes (grpE-dnaK-dnaJ and groELS operons). Prevents heat-shock induction of these operons. The polypeptide is Heat-inducible transcription repressor HrcA (Streptococcus pyogenes serotype M6 (strain ATCC BAA-946 / MGAS10394)).